The sequence spans 250 residues: Peptidyl-tRNA hydrolase (250 aa).

Position 14 (Tyr-14) interacts with tRNA. His-19 serves as the catalytic Proton acceptor. Residues Phe-64, Asn-66, and Asn-112 each coordinate tRNA. The disordered stretch occupies residues 192-250 (MGDGNQRPGGVKTDPAQLEKAPPKAQSHIRQARQNQKKPNIPESGPMAEMLKKLLGKKD). The segment covering 219–229 (HIRQARQNQKK) has biased composition (polar residues). The span at 241-250 (MLKKLLGKKD) shows a compositional bias: basic and acidic residues.

This sequence belongs to the PTH family. As to quaternary structure, monomer.

Its subcellular location is the cytoplasm. The enzyme catalyses an N-acyl-L-alpha-aminoacyl-tRNA + H2O = an N-acyl-L-amino acid + a tRNA + H(+). In terms of biological role, hydrolyzes ribosome-free peptidyl-tRNAs (with 1 or more amino acids incorporated), which drop off the ribosome during protein synthesis, or as a result of ribosome stalling. Functionally, catalyzes the release of premature peptidyl moieties from peptidyl-tRNA molecules trapped in stalled 50S ribosomal subunits, and thus maintains levels of free tRNAs and 50S ribosomes. The protein is Peptidyl-tRNA hydrolase of Brucella canis (strain ATCC 23365 / NCTC 10854 / RM-666).